Here is a 299-residue protein sequence, read N- to C-terminus: Proline iminopeptidase (299 aa).

One can recognise an AB hydrolase-1 domain in the interval 26–272 (VLLLAGGPGF…QFLYCANGSH (247 aa)). Ser103 (nucleophile) is an active-site residue. Asp245 is an active-site residue. His272 acts as the Proton donor in catalysis.

Belongs to the peptidase S33 family. Monomer.

The catalysed reaction is Release of N-terminal proline from a peptide.. Its function is as follows. Releases the N-terminal proline from various substrates. In Chitinophaga pinensis (strain ATCC 43595 / DSM 2588 / LMG 13176 / NBRC 15968 / NCIMB 11800 / UQM 2034), this protein is Proline iminopeptidase.